Here is a 382-residue protein sequence, read N- to C-terminus: uncharacterized protein (382 aa).

The next 12 helical transmembrane spans lie at 14–34 (GLLL…LWLA), 45–65 (VVSS…GYVI), 79–99 (FIFA…SWLA), 102–122 (FVAG…LMCS), 131–151 (LLAA…LLVS), 157–177 (LMSV…PLLF), 204–224 (LGVN…GLMP), 235–255 (ASIG…QWPI), 270–290 (VQVF…AMAP), 291–311 (ALFI…AWAC), 325–345 (ALLL…AMLM), and 348–368 (FSDN…LLML).

It belongs to the major facilitator superfamily. YcaD (TC 2.A.1.26) family.

It localises to the cell inner membrane. This is an uncharacterized protein from Escherichia coli (strain K12 / MC4100 / BW2952).